A 395-amino-acid chain; its full sequence is Chalcone synthase 1 (395 aa).

V2 carries the post-translational modification N-acetylvaline. Residue C169 is part of the active site.

This sequence belongs to the thiolase-like superfamily. Chalcone/stilbene synthases family.

The catalysed reaction is (E)-4-coumaroyl-CoA + 3 malonyl-CoA + 3 H(+) = 2',4,4',6'-tetrahydroxychalcone + 3 CO2 + 4 CoA. The protein operates within secondary metabolite biosynthesis; flavonoid biosynthesis. Functionally, the primary product of this enzyme is 4,2',4',6'-tetrahydroxychalcone (also termed naringenin-chalcone or chalcone) which can under specific conditions spontaneously isomerize into naringenin. This Sinapis alba (White mustard) protein is Chalcone synthase 1 (CHS1).